The chain runs to 295 residues: Nucleotide-binding protein LACR_1047 (295 aa).

ATP is bound at residue 12–19 (GMSGAGKT). Residue 63–66 (DMRS) coordinates GTP.

This sequence belongs to the RapZ-like family.

Functionally, displays ATPase and GTPase activities. This Lactococcus lactis subsp. cremoris (strain SK11) protein is Nucleotide-binding protein LACR_1047.